The chain runs to 378 residues: uncharacterized protein (378 aa).

One can recognise a Guanylate cyclase domain in the interval 208–317 (GIGFADLSSF…NPVNLAARLV (110 aa)).

It belongs to the adenylyl cyclase class-4/guanylyl cyclase family.

This is an uncharacterized protein from Mycobacterium bovis (strain ATCC BAA-935 / AF2122/97).